The sequence spans 276 residues: Acetyl-coenzyme A carboxylase carboxyl transferase subunit beta (276 aa).

A CoA carboxyltransferase N-terminal domain is found at 24-276 (LWRECSNCHE…NNLLNLHSDK (253 aa)). 4 residues coordinate Zn(2+): Cys28, Cys31, Cys46, and Cys49. A C4-type zinc finger spans residues 28 to 49 (CSNCHEKFYYRRAGVYEVCPNC).

This sequence belongs to the AccD/PCCB family. In terms of assembly, acetyl-CoA carboxylase is a heterohexamer composed of biotin carboxyl carrier protein (AccB), biotin carboxylase (AccC) and two subunits each of ACCase subunit alpha (AccA) and ACCase subunit beta (AccD). Zn(2+) serves as cofactor.

It is found in the cytoplasm. It carries out the reaction N(6)-carboxybiotinyl-L-lysyl-[protein] + acetyl-CoA = N(6)-biotinyl-L-lysyl-[protein] + malonyl-CoA. It functions in the pathway lipid metabolism; malonyl-CoA biosynthesis; malonyl-CoA from acetyl-CoA: step 1/1. In terms of biological role, component of the acetyl coenzyme A carboxylase (ACC) complex. Biotin carboxylase (BC) catalyzes the carboxylation of biotin on its carrier protein (BCCP) and then the CO(2) group is transferred by the transcarboxylase to acetyl-CoA to form malonyl-CoA. This Pediococcus pentosaceus (strain ATCC 25745 / CCUG 21536 / LMG 10740 / 183-1w) protein is Acetyl-coenzyme A carboxylase carboxyl transferase subunit beta.